Here is a 109-residue protein sequence, read N- to C-terminus: Translation initiation factor IF-1, chloroplastic (109 aa).

An S1-like domain is found at 18 to 93; sequence KSLNQEKENL…TRGRIIYRLK (76 aa).

It belongs to the IF-1 family. In terms of assembly, component of the 30S ribosomal translation pre-initiation complex which assembles on the 30S ribosome in the order IF-2 and IF-3, IF-1 and N-formylmethionyl-tRNA(fMet); mRNA recruitment can occur at any time during PIC assembly.

It is found in the plastid. The protein resides in the chloroplast. In terms of biological role, one of the essential components for the initiation of protein synthesis. Stabilizes the binding of IF-2 and IF-3 on the 30S subunit to which N-formylmethionyl-tRNA(fMet) subsequently binds. Helps modulate mRNA selection, yielding the 30S pre-initiation complex (PIC). Upon addition of the 50S ribosomal subunit IF-1, IF-2 and IF-3 are released leaving the mature 70S translation initiation complex. The protein is Translation initiation factor IF-1, chloroplastic of Tupiella akineta (Green alga).